A 770-amino-acid chain; its full sequence is Tripartite terminase subunit 1 (770 aa).

The segment at 199 to 227 (CAICFEELCITANQGETLHRRLLGCICDH) adopts a C3H1-type zinc-finger fold. 675–682 (FTSVFHCG) is a binding site for ATP.

This sequence belongs to the herpesviridae TRM1 protein family. Associates with TRM2 and TRM3 to form the tripartite terminase complex. Interacts with portal protein.

The protein localises to the host nucleus. Component of the molecular motor that translocates viral genomic DNA in empty capsid during DNA packaging. Forms a tripartite terminase complex together with TRM2 and TRM3 in the host cytoplasm. Once the complex reaches the host nucleus, it interacts with the capsid portal vertex. This portal forms a ring in which genomic DNA is translocated into the capsid. TRM1 carries an endonuclease activity that plays an important role for the cleavage of concatemeric viral DNA into unit length genomes. This Varicella-zoster virus (strain Dumas) (HHV-3) protein is Tripartite terminase subunit 1.